A 273-amino-acid chain; its full sequence is Shikimate dehydrogenase (NADP(+)) (273 aa).

Shikimate is bound by residues 15-17 and threonine 62; that span reads SLS. Residue lysine 66 is the Proton acceptor of the active site. Glutamate 78 contacts NADP(+). Residues asparagine 87 and aspartate 102 each contribute to the shikimate site. NADP(+) is bound by residues 126–130, 149–154, isoleucine 215, and glycine 238; these read GAGGA and NRTPER.

This sequence belongs to the shikimate dehydrogenase family. As to quaternary structure, homodimer.

It catalyses the reaction shikimate + NADP(+) = 3-dehydroshikimate + NADPH + H(+). It functions in the pathway metabolic intermediate biosynthesis; chorismate biosynthesis; chorismate from D-erythrose 4-phosphate and phosphoenolpyruvate: step 4/7. In terms of biological role, involved in the biosynthesis of the chorismate, which leads to the biosynthesis of aromatic amino acids. Catalyzes the reversible NADPH linked reduction of 3-dehydroshikimate (DHSA) to yield shikimate (SA). The protein is Shikimate dehydrogenase (NADP(+)) of Desulfitobacterium hafniense (strain Y51).